An 899-amino-acid chain; its full sequence is RNA-binding motif protein 25 (899 aa).

Residues M1–S20 are compositionally biased toward polar residues. Residues M1–G112 are disordered. Residues I26 to Q63 are compositionally biased toward pro residues. The RRM domain occupies T204–A281. Disordered regions lie at residues K298–L572 and G611–G778. Composition is skewed to basic and acidic residues over residues E317–I340 and E354–K372. Residues P375–A384 show a composition bias toward pro residues. Basic and acidic residues predominate over residues W430–K505. Residues N434–D578 are a coiled coil. Residues Y515 to D524 are compositionally biased toward acidic residues. Positions S526–A533 match the Nuclear localization signal 1 motif. Over residues A533–E568 the composition is skewed to basic and acidic residues. Polar residues predominate over residues G626–S640. 2 stretches are compositionally biased toward basic and acidic residues: residues P723–Q733 and D740–G778. Positions S735–A742 match the Nuclear localization signal 2 motif. Residues E802 to A899 form the PWI domain.

As to quaternary structure, specifically associates with functional splicing complexes. Associates with exon junction complex (EJC) proteins. Phosphorylated; the phosphorylation level is repressed by abscisic acid (ABA).

Its subcellular location is the nucleus. In terms of biological role, RNA-binding protein that acts as a regulator of alternative pre-mRNA splicing. Negative regulator of responses to abscisic acid (ABA), including in early development. In Arabidopsis thaliana (Mouse-ear cress), this protein is RNA-binding motif protein 25.